A 309-amino-acid chain; its full sequence is Glutaminase (309 aa).

Residues Ser64, Asn114, Glu160, Asn167, Tyr191, Tyr243, and Val261 each coordinate substrate.

Belongs to the glutaminase family. In terms of assembly, homotetramer.

The catalysed reaction is L-glutamine + H2O = L-glutamate + NH4(+). The polypeptide is Glutaminase (Agrobacterium fabrum (strain C58 / ATCC 33970) (Agrobacterium tumefaciens (strain C58))).